A 180-amino-acid chain; its full sequence is Oligoribonuclease (180 aa).

In terms of domain architecture, Exonuclease spans 7–168 (LVWIDLEMTG…QDIRDSIDEL (162 aa)). Y128 is a catalytic residue.

This sequence belongs to the oligoribonuclease family.

It localises to the cytoplasm. Functionally, 3'-to-5' exoribonuclease specific for small oligoribonucleotides. The chain is Oligoribonuclease from Dichelobacter nodosus (strain VCS1703A).